A 233-amino-acid polypeptide reads, in one-letter code: Small ribosomal subunit protein uS2 (233 aa).

The protein belongs to the universal ribosomal protein uS2 family.

The polypeptide is Small ribosomal subunit protein uS2 (Clostridium acetobutylicum (strain ATCC 824 / DSM 792 / JCM 1419 / IAM 19013 / LMG 5710 / NBRC 13948 / NRRL B-527 / VKM B-1787 / 2291 / W)).